Here is a 358-residue protein sequence, read N- to C-terminus: Vascular endothelial growth factor D (358 aa).

The signal sequence occupies residues 1 to 21; it reads MYGEWGMGNILMMFHVYLVQG. Residues 22 to 93 constitute a propeptide that is removed on maturation; that stretch reads FRSEHGPVKD…SRSASHRSTR (72 aa). 3 disulfides stabilise this stretch: Cys-116–Cys-158, Cys-147–Cys-194, and Cys-151–Cys-196. N-linked (GlcNAc...) asparagine glycosylation is found at Asn-160 and Asn-190. A propeptide spanning residues 211–358 is cleaved from the precursor; that stretch reads SIQTPEEDEC…AQGLYSQENP (148 aa). Residues 227–242 form a 1; approximate repeat; sequence CPIDMLWDNTKCKCVL. The segment at 227–323 is 4 X 16 AA repeats of C-X(10)-C-X-C-X(1,3)-C; sequence CPIDMLWDNT…PDTCSCEDRC (97 aa). Tandem repeats lie at residues 263-278, 282-298, and 306-323. Asn-292 carries N-linked (GlcNAc...) asparagine glycosylation.

It belongs to the PDGF/VEGF growth factor family. Homodimer; non-covalent and antiparallel. Post-translationally, undergoes a complex proteolytic maturation which generates a variety of processed secreted forms with increased activity toward VEGFR-3 and VEGFR-2. VEGF-D first form an antiparallel homodimer linked by disulfide bonds before secretion. The fully processed VEGF-D is composed mostly of two VEGF homology domains (VHDs) bound by non-covalent interactions. As to expression, highly expressed in fetal and adult lung.

The protein resides in the secreted. Growth factor active in angiogenesis, lymphangiogenesis and endothelial cell growth, stimulating their proliferation and migration and also has effects on the permeability of blood vessels. May function in the formation of the venous and lymphatic vascular systems during embryogenesis, and also in the maintenance of differentiated lymphatic endothelium in adults. Binds and activates VEGFR-3 (Flt4) receptor. The chain is Vascular endothelial growth factor D from Mus musculus (Mouse).